A 30-amino-acid polypeptide reads, in one-letter code: Nattererin-1 (30 aa).

As to expression, expressed by the skin glands.

Its subcellular location is the secreted. Its function is as follows. Probably has antibacterial activity. The sequence is that of Nattererin-1 from Physalaemus nattereri (Cuyaba dwarf frog).